A 780-amino-acid polypeptide reads, in one-letter code: Zinc finger protein GLIS3 (780 aa).

Composition is skewed to polar residues over residues 80–92 (PSLSSSHSSQNGT) and 106–115 (VSGNSVSNSL). Disordered stretches follow at residues 80 to 148 (PSLS…KKRA) and 290 to 315 (PSALPLPLPPPQGPPPPYHAHPHLHH). Residues 135–148 (SATRAHSTRSKKRA) are compositionally biased toward basic residues. The segment covering 293 to 308 (LPLPLPPPQGPPPPYH) has biased composition (pro residues). Residues 345 to 370 (HCCRWIDCSALYDQQEELVRHIEKVH) form a C2H2-type 1 zinc finger. Residues 379–406 (FTCFWTGCPRRYKPFNARYKLLIHMRVH) form a C2H2-type 2; atypical zinc finger. 3 consecutive C2H2-type zinc fingers follow at residues 412–436 (NKCTFEGCKKAFSRLENLKIHLRSH), 442–466 (YLCQHPGCQKAFSNSSDRAKHQRTH), and 472–496 (YACQIPGCTKRYTDPSSLRKHVKAH). 2 disordered regions span residues 485–512 (DPSSLRKHVKAHSSREQQARKKLRSSTE) and 527–670 (LQPA…QPNG). The Bipartite nuclear localization signal motif lies at 490–506 (RKHVKAHSSREQQARKK). Residues 497–512 (SSREQQARKKLRSSTE) show a composition bias toward basic and acidic residues. The segment covering 567–577 (HSTRSGTAAGA) has biased composition (low complexity). Residues 593–605 (VQGSPHNPSSQLP) show a composition bias toward polar residues.

The protein belongs to the GLI C2H2-type zinc-finger protein family. As to expression, in the embryo, expressed at high levels in the kidney and testis. In the adult, expressed at high levels in the kidney and uterus and at lower levels in the brain, lung, skeletal muscle and pancreas.

Its subcellular location is the nucleus. Functionally, acts both as a repressor and activator of transcription. Binds to the consensus sequence 5'-GACCACCCAC-3'. The chain is Zinc finger protein GLIS3 from Mus musculus (Mouse).